Consider the following 1220-residue polypeptide: von Willebrand factor A domain-containing protein 5B1 (1220 aa).

An N-terminal signal peptide occupies residues 1–18 (MPGLLNWITGAALPLTAS). Positions 19 to 149 (DVTSCVSGYA…NVTIFISTSS (131 aa)) constitute a VIT domain. Asparagine 140 carries an N-linked (GlcNAc...) asparagine glycan. Positions 361–529 (EFIFLIDRSS…RLQPKMVKSL (169 aa)) constitute a VWFA domain. Asparagine 650 is a glycosylation site (N-linked (GlcNAc...) asparagine). The interval 715-807 (NSGQDLNQGP…SPSRPATPAP (93 aa)) is disordered. Residues 757-774 (VRERTSDSRSPGDLEPSH) show a composition bias toward basic and acidic residues. The segment covering 796-807 (RASPSRPATPAP) has biased composition (low complexity). Tyrosine 881 is modified (phosphotyrosine). Disordered stretches follow at residues 937 to 962 (RGTS…GKFQ) and 976 to 995 (EARS…QRSL). N-linked (GlcNAc...) asparagine glycosylation is present at asparagine 1017. Positions 1093-1111 (TTRPSESKTPSPQLCTSSP) are enriched in polar residues. The disordered stretch occupies residues 1093–1115 (TTRPSESKTPSPQLCTSSPPRHP).

The protein localises to the secreted. This chain is von Willebrand factor A domain-containing protein 5B1 (VWA5B1), found in Homo sapiens (Human).